The sequence spans 303 residues: GTPase Era (303 aa).

The region spanning tyrosine 8–glutamate 176 is the Era-type G domain. The tract at residues glycine 16–serine 23 is G1. Residue glycine 16–serine 23 coordinates GTP. A G2 region spans residues glutamine 42–histidine 46. Residues aspartate 63 to glycine 66 form a G3 region. Residues aspartate 63 to leucine 67 and asparagine 125 to aspartate 128 each bind GTP. A G4 region spans residues asparagine 125–aspartate 128. The G5 stretch occupies residues isoleucine 155–alanine 157. The region spanning leucine 207–serine 284 is the KH type-2 domain.

Belongs to the TRAFAC class TrmE-Era-EngA-EngB-Septin-like GTPase superfamily. Era GTPase family. In terms of assembly, monomer.

Its subcellular location is the cytoplasm. It localises to the cell inner membrane. An essential GTPase that binds both GDP and GTP, with rapid nucleotide exchange. Plays a role in 16S rRNA processing and 30S ribosomal subunit biogenesis and possibly also in cell cycle regulation and energy metabolism. The sequence is that of GTPase Era from Yersinia enterocolitica serotype O:8 / biotype 1B (strain NCTC 13174 / 8081).